The sequence spans 504 residues: Anaerobic nitric oxide reductase transcription regulator NorR (504 aa).

Residue aspartate 57 is modified to 4-aspartylphosphate. The region spanning 187-416 (MIGLSPGMTQ…LEHAIHRAVV (230 aa)) is the Sigma-54 factor interaction domain. Residues 215 to 222 (GETGTGKE) and 278 to 287 (ADNGTLFLDE) each bind ATP. The H-T-H motif DNA-binding region spans 479 to 498 (WAASARMLETDVANLHRLAK).

It functions in the pathway nitrogen metabolism; nitric oxide reduction. In terms of biological role, required for the expression of anaerobic nitric oxide (NO) reductase, acts as a transcriptional activator for at least the norVW operon. Activation also requires sigma-54. The chain is Anaerobic nitric oxide reductase transcription regulator NorR from Escherichia coli O7:K1 (strain IAI39 / ExPEC).